A 313-amino-acid chain; its full sequence is PDZ domain-containing protein GIPC2 (313 aa).

Over residues K14 to A27 the composition is skewed to basic and acidic residues. The interval K14–S34 is disordered. The region spanning E117–E197 is the PDZ domain.

This sequence belongs to the GIPC family. Probably interacts with SEMA5A.

It is found in the cytoplasm. This is PDZ domain-containing protein GIPC2 (GIPC2) from Bos taurus (Bovine).